Consider the following 299-residue polypeptide: Small ribosomal subunit protein uS2 (299 aa).

The tract at residues 227–299 (SERKSEKSTK…DKAKASNEEE (73 aa)) is disordered.

The protein belongs to the universal ribosomal protein uS2 family.

The protein is Small ribosomal subunit protein uS2 of Christiangramia forsetii (strain DSM 17595 / CGMCC 1.15422 / KT0803) (Gramella forsetii).